The following is a 483-amino-acid chain: UDP-N-acetylmuramate--L-alanine ligase (483 aa).

An ATP-binding site is contributed by 112 to 118 (GTHGKTT).

This sequence belongs to the MurCDEF family.

The protein resides in the cytoplasm. The enzyme catalyses UDP-N-acetyl-alpha-D-muramate + L-alanine + ATP = UDP-N-acetyl-alpha-D-muramoyl-L-alanine + ADP + phosphate + H(+). The protein operates within cell wall biogenesis; peptidoglycan biosynthesis. Cell wall formation. The sequence is that of UDP-N-acetylmuramate--L-alanine ligase from Ralstonia pickettii (strain 12J).